The primary structure comprises 295 residues: uncharacterized protein (295 aa).

A signal peptide spans 1–19; the sequence is MFKKYIFILILFIASIARA. Residues 275–295 form a disordered region; the sequence is RNNPPLKNNNAKGKNPYDTNK. Over residues 276–295 the composition is skewed to low complexity; it reads NNPPLKNNNAKGKNPYDTNK.

This is an uncharacterized protein from Rickettsia conorii (strain ATCC VR-613 / Malish 7).